Reading from the N-terminus, the 280-residue chain is Ribonuclease Z (280 aa).

Histidine 61, histidine 63, aspartate 65, histidine 66, histidine 153, aspartate 176, and histidine 240 together coordinate Zn(2+). Residue aspartate 65 is the Proton acceptor of the active site.

The protein belongs to the RNase Z family. Homodimer. Zn(2+) is required as a cofactor.

The catalysed reaction is Endonucleolytic cleavage of RNA, removing extra 3' nucleotides from tRNA precursor, generating 3' termini of tRNAs. A 3'-hydroxy group is left at the tRNA terminus and a 5'-phosphoryl group is left at the trailer molecule.. Its function is as follows. Zinc phosphodiesterase, which displays some tRNA 3'-processing endonuclease activity. Probably involved in tRNA maturation, by removing a 3'-trailer from precursor tRNA. This is Ribonuclease Z from Mycolicibacterium paratuberculosis (strain ATCC BAA-968 / K-10) (Mycobacterium paratuberculosis).